Here is a 176-residue protein sequence, read N- to C-terminus: 3-hydroxyanthranilate 3,4-dioxygenase (176 aa).

Arg44 serves as a coordination point for O2. Fe cation contacts are provided by His48, Glu54, and His92. Glu54 contacts substrate. Substrate-binding residues include Arg96 and Glu106. Cys121, Cys124, Cys158, and Cys161 together coordinate Fe cation.

Belongs to the 3-HAO family. In terms of assembly, homodimer. It depends on Fe(2+) as a cofactor.

The enzyme catalyses 3-hydroxyanthranilate + O2 = (2Z,4Z)-2-amino-3-carboxymuconate 6-semialdehyde. Its pathway is cofactor biosynthesis; NAD(+) biosynthesis; quinolinate from L-kynurenine: step 3/3. Catalyzes the oxidative ring opening of 3-hydroxyanthranilate to 2-amino-3-carboxymuconate semialdehyde, which spontaneously cyclizes to quinolinate. The sequence is that of 3-hydroxyanthranilate 3,4-dioxygenase from Xanthomonas euvesicatoria pv. vesicatoria (strain 85-10) (Xanthomonas campestris pv. vesicatoria).